Here is a 437-residue protein sequence, read N- to C-terminus: Putative ankyrin repeat protein FPV014 (437 aa).

7 ANK repeats span residues 32–61 (YGCS…NPDL), 65–94 (STPT…DPDN), 99–128 (ESRT…DAED), 131–160 (RFNC…RINS), 164–195 (GSVY…DVED), 197–226 (LSFS…SVDV), and 230–259 (CGRT…DTSV).

In Fowlpox virus (strain NVSL) (FPV), this protein is Putative ankyrin repeat protein FPV014.